A 459-amino-acid chain; its full sequence is O-phospho-L-seryl-tRNA:Cys-tRNA synthase 1 (459 aa).

Residues 152–153 (AR), asparagine 257, and 280–282 (SGH) each bind pyridoxal 5'-phosphate. Position 283 is an N6-(pyridoxal phosphate)lysine (lysine 283).

The protein belongs to the SepCysS family. As to quaternary structure, homodimer. Interacts with SepRS. Requires pyridoxal 5'-phosphate as cofactor.

The enzyme catalyses O-phospho-L-seryl-tRNA(Cys) + hydrogen sulfide + H(+) = L-cysteinyl-tRNA(Cys) + phosphate. Functionally, converts O-phospho-L-seryl-tRNA(Cys) (Sep-tRNA(Cys)) to L-cysteinyl-tRNA(Cys) (Cys-tRNA(Cys)). The polypeptide is O-phospho-L-seryl-tRNA:Cys-tRNA synthase 1 (Methanococcoides burtonii (strain DSM 6242 / NBRC 107633 / OCM 468 / ACE-M)).